We begin with the raw amino-acid sequence, 357 residues long: Probable dual-specificity RNA methyltransferase RlmN (357 aa).

The Proton acceptor role is filled by Glu92. One can recognise a Radical SAM core domain in the interval 98-330; sequence QEYGLSVCVT…KKNGINCVIR (233 aa). The cysteines at positions 105 and 341 are disulfide-linked. Cys112, Cys116, and Cys119 together coordinate [4Fe-4S] cluster. Residues 164 to 165, Ser196, 219 to 221, and Asn297 contribute to the S-adenosyl-L-methionine site; these read GE and SLH. The active-site S-methylcysteine intermediate is the Cys341.

This sequence belongs to the radical SAM superfamily. RlmN family. The cofactor is [4Fe-4S] cluster.

The protein localises to the cytoplasm. It carries out the reaction adenosine(2503) in 23S rRNA + 2 reduced [2Fe-2S]-[ferredoxin] + 2 S-adenosyl-L-methionine = 2-methyladenosine(2503) in 23S rRNA + 5'-deoxyadenosine + L-methionine + 2 oxidized [2Fe-2S]-[ferredoxin] + S-adenosyl-L-homocysteine. The catalysed reaction is adenosine(37) in tRNA + 2 reduced [2Fe-2S]-[ferredoxin] + 2 S-adenosyl-L-methionine = 2-methyladenosine(37) in tRNA + 5'-deoxyadenosine + L-methionine + 2 oxidized [2Fe-2S]-[ferredoxin] + S-adenosyl-L-homocysteine. Its function is as follows. Specifically methylates position 2 of adenine 2503 in 23S rRNA and position 2 of adenine 37 in tRNAs. This is Probable dual-specificity RNA methyltransferase RlmN from Enterococcus faecalis (strain ATCC 700802 / V583).